Here is a 623-residue protein sequence, read N- to C-terminus: Probable lysophospholipase 5 (623 aa).

An N-terminal signal peptide occupies residues 1–19 (MKLSSFGLFLALQLLPALG). The PLA2c domain maps to 67–607 (ACPSGSLLRP…NQYCWNGTIA (541 aa)). N-linked (GlcNAc...) asparagine glycans are attached at residues asparagine 118, asparagine 153, asparagine 187, asparagine 232, asparagine 256, asparagine 264, asparagine 293, asparagine 331, asparagine 360, asparagine 367, asparagine 400, asparagine 403, asparagine 474, asparagine 508, asparagine 513, asparagine 537, asparagine 564, asparagine 586, and asparagine 603.

It belongs to the lysophospholipase family.

Its subcellular location is the secreted. The enzyme catalyses a 1-acyl-sn-glycero-3-phosphocholine + H2O = sn-glycerol 3-phosphocholine + a fatty acid + H(+). Functionally, catalyzes the release of fatty acids from lysophospholipids. The polypeptide is Probable lysophospholipase 5 (plb5) (Schizosaccharomyces pombe (strain 972 / ATCC 24843) (Fission yeast)).